The sequence spans 349 residues: GTP 3',8-cyclase (349 aa).

The Radical SAM core domain occupies 24-249; that stretch reads PFGRAITYLR…VDSDYQTGGP (226 aa). Arginine 33 contacts GTP. The [4Fe-4S] cluster site is built by cysteine 40 and cysteine 44. Tyrosine 46 contacts S-adenosyl-L-methionine. Cysteine 47 serves as a coordination point for [4Fe-4S] cluster. Arginine 82 is a binding site for GTP. Glycine 86 provides a ligand contact to S-adenosyl-L-methionine. Threonine 116 serves as a coordination point for GTP. Serine 140 is an S-adenosyl-L-methionine binding site. Residue lysine 176 coordinates GTP. Methionine 210 is a binding site for S-adenosyl-L-methionine. 2 residues coordinate [4Fe-4S] cluster: cysteine 273 and cysteine 276. 278–280 is a GTP binding site; the sequence is RVR. Cysteine 290 lines the [4Fe-4S] cluster pocket.

This sequence belongs to the radical SAM superfamily. MoaA family. In terms of assembly, monomer and homodimer. [4Fe-4S] cluster is required as a cofactor.

The catalysed reaction is GTP + AH2 + S-adenosyl-L-methionine = (8S)-3',8-cyclo-7,8-dihydroguanosine 5'-triphosphate + 5'-deoxyadenosine + L-methionine + A + H(+). Its pathway is cofactor biosynthesis; molybdopterin biosynthesis. Catalyzes the cyclization of GTP to (8S)-3',8-cyclo-7,8-dihydroguanosine 5'-triphosphate. The sequence is that of GTP 3',8-cyclase from Agrobacterium fabrum (strain C58 / ATCC 33970) (Agrobacterium tumefaciens (strain C58)).